The following is a 332-amino-acid chain: GTP 3',8-cyclase (332 aa).

The Radical SAM core domain occupies 9 to 220 (RFARKVDYLR…DQVRERIAER (212 aa)). Arginine 18 lines the GTP pocket. [4Fe-4S] cluster-binding residues include cysteine 25 and cysteine 29. Residue tyrosine 31 participates in S-adenosyl-L-methionine binding. Cysteine 32 is a [4Fe-4S] cluster binding site. A GTP-binding site is contributed by arginine 67. Position 71 (glycine 71) interacts with S-adenosyl-L-methionine. GTP is bound at residue threonine 98. Residue serine 122 participates in S-adenosyl-L-methionine binding. Lysine 159 contacts GTP. Methionine 193 lines the S-adenosyl-L-methionine pocket. Residues cysteine 258 and cysteine 261 each coordinate [4Fe-4S] cluster. 263–265 (RVR) is a binding site for GTP. Cysteine 275 provides a ligand contact to [4Fe-4S] cluster.

This sequence belongs to the radical SAM superfamily. MoaA family. As to quaternary structure, monomer and homodimer. [4Fe-4S] cluster is required as a cofactor.

It catalyses the reaction GTP + AH2 + S-adenosyl-L-methionine = (8S)-3',8-cyclo-7,8-dihydroguanosine 5'-triphosphate + 5'-deoxyadenosine + L-methionine + A + H(+). It functions in the pathway cofactor biosynthesis; molybdopterin biosynthesis. Its function is as follows. Catalyzes the cyclization of GTP to (8S)-3',8-cyclo-7,8-dihydroguanosine 5'-triphosphate. This chain is GTP 3',8-cyclase, found in Pseudomonas savastanoi pv. phaseolicola (strain 1448A / Race 6) (Pseudomonas syringae pv. phaseolicola (strain 1448A / Race 6)).